Reading from the N-terminus, the 409-residue chain is Peptidase T (409 aa).

H78 provides a ligand contact to Zn(2+). Residue D80 is part of the active site. Residue D140 coordinates Zn(2+). Residue E173 is the Proton acceptor of the active site. Zn(2+) is bound by residues E174, D196, and H379.

Belongs to the peptidase M20B family. It depends on Zn(2+) as a cofactor.

It is found in the cytoplasm. It catalyses the reaction Release of the N-terminal residue from a tripeptide.. In terms of biological role, cleaves the N-terminal amino acid of tripeptides. This chain is Peptidase T, found in Serratia proteamaculans (strain 568).